The sequence spans 184 residues: Large ribosomal subunit protein bL17 (184 aa).

The segment at 126 to 184 is disordered; sequence TRAARAAASKQTADEAQVEETPAEEVTEETAAEETTEAAQADEAPAEEAPVEEKKDEEK. Acidic residues predominate over residues 141–161; it reads AQVEETPAEEVTEETAAEETT.

The protein belongs to the bacterial ribosomal protein bL17 family. In terms of assembly, part of the 50S ribosomal subunit. Contacts protein L32.

In Corynebacterium efficiens (strain DSM 44549 / YS-314 / AJ 12310 / JCM 11189 / NBRC 100395), this protein is Large ribosomal subunit protein bL17.